The following is a 545-amino-acid chain: EH domain-containing protein 1 (545 aa).

2 EF-hand domains span residues 14-49 (ENQM…SNLP) and 50-83 (RPEL…VSLA). An EH domain is found at 15 to 93 (NQMIYKEWFE…QTGHEISHEV (79 aa)). Ca(2+) is bound by residues Asp27, Asp29, Asp31, Arg33, Asp38, Asp61, Tyr67, and Glu72. Positions 194 to 429 (FDAKPMVMLL…DLLADLKDIP (236 aa)) constitute a Dynamin-type G domain. Positions 204–211 (GQYSTGKT) are G1 motif. 204 to 211 (GQYSTGKT) is a GTP binding site. A G2 motif region spans residues 230-231 (EP). The G3 motif stretch occupies residues 292-295 (DTPG). Residues 309-313 (DFTGV) and Lys359 each bind GTP. The tract at residues 358-361 (NKAD) is G4 motif. Position 382 (Val382) is a region of interest, G5 motif. Position 395 to 398 (395 to 398 (SFSD)) interacts with GTP. Residues 467–490 (KAKAQQKLIDNLEDEFGKVQREHH) are a coiled coil.

The protein belongs to the TRAFAC class dynamin-like GTPase superfamily. Dynamin/Fzo/YdjA family. EHD subfamily. As to quaternary structure, homooligomer, and heterooligomer with EHD2.

The protein resides in the endosome membrane. It localises to the cell membrane. The protein localises to the cytoplasm. The catalysed reaction is GTP + H2O = GDP + phosphate + H(+). Its function is as follows. Involved in endocytosis positive regulation. Acts in early endocytic membrane fusion and membrane trafficking of recycling endosomes. Confers salt tolerance. The sequence is that of EH domain-containing protein 1 from Arabidopsis thaliana (Mouse-ear cress).